Here is a 115-residue protein sequence, read N- to C-terminus: Large ribosomal subunit protein bL19 (115 aa).

This sequence belongs to the bacterial ribosomal protein bL19 family.

In terms of biological role, this protein is located at the 30S-50S ribosomal subunit interface and may play a role in the structure and function of the aminoacyl-tRNA binding site. The sequence is that of Large ribosomal subunit protein bL19 from Streptococcus uberis (strain ATCC BAA-854 / 0140J).